The following is a 206-amino-acid chain: Ribosomal RNA large subunit methyltransferase E (206 aa).

S-adenosyl-L-methionine-binding residues include Gly-60, Trp-62, Asp-80, Asp-96, and Asp-121. Lys-161 (proton acceptor) is an active-site residue.

The protein belongs to the class I-like SAM-binding methyltransferase superfamily. RNA methyltransferase RlmE family.

The protein localises to the cytoplasm. It carries out the reaction uridine(2552) in 23S rRNA + S-adenosyl-L-methionine = 2'-O-methyluridine(2552) in 23S rRNA + S-adenosyl-L-homocysteine + H(+). Its function is as follows. Specifically methylates the uridine in position 2552 of 23S rRNA at the 2'-O position of the ribose in the fully assembled 50S ribosomal subunit. The sequence is that of Ribosomal RNA large subunit methyltransferase E from Saccharophagus degradans (strain 2-40 / ATCC 43961 / DSM 17024).